The chain runs to 629 residues: Arginine--tRNA ligase (629 aa).

A 'HIGH' region motif is present at residues 128–138 (VNPTKPLHMGH).

It belongs to the class-I aminoacyl-tRNA synthetase family.

It localises to the cytoplasm. It catalyses the reaction tRNA(Arg) + L-arginine + ATP = L-arginyl-tRNA(Arg) + AMP + diphosphate. The polypeptide is Arginine--tRNA ligase (Pyrococcus furiosus (strain ATCC 43587 / DSM 3638 / JCM 8422 / Vc1)).